The following is a 63-amino-acid chain: Large ribosomal subunit protein uL29 (63 aa).

The protein belongs to the universal ribosomal protein uL29 family.

This Serratia proteamaculans (strain 568) protein is Large ribosomal subunit protein uL29.